The following is a 219-amino-acid chain: MDYDEKRERLAERLRQELNLSRKVYEAIRKVPRHLFVPESYKNEAYVDTPLPIGYGQTISAPHMVAIMCELLDLREGDKVLEVGTGCGYHAAVTAEIVGKSGKVISIEYIPELAERARAILKALGYDNVEVIVGDGSKGYEKEAPYDKIYVTAAAPDIPKPLIEQLKPRGRMVIPVGDSVQWLIIVEKDESGNVRKKNWGSVRFVPLRGEYGFKSVRYD.

The active site involves Ser60.

Belongs to the methyltransferase superfamily. L-isoaspartyl/D-aspartyl protein methyltransferase family.

The protein resides in the cytoplasm. The enzyme catalyses [protein]-L-isoaspartate + S-adenosyl-L-methionine = [protein]-L-isoaspartate alpha-methyl ester + S-adenosyl-L-homocysteine. Its function is as follows. Catalyzes the methyl esterification of L-isoaspartyl residues in peptides and proteins that result from spontaneous decomposition of normal L-aspartyl and L-asparaginyl residues. It plays a role in the repair and/or degradation of damaged proteins. This Archaeoglobus fulgidus (strain ATCC 49558 / DSM 4304 / JCM 9628 / NBRC 100126 / VC-16) protein is Protein-L-isoaspartate O-methyltransferase 2 (pcm2).